The chain runs to 405 residues: Phosphopentomutase (405 aa).

Mn(2+)-binding residues include D10, D303, H308, D344, H345, and H356.

It belongs to the phosphopentomutase family. Mn(2+) is required as a cofactor.

It is found in the cytoplasm. It carries out the reaction 2-deoxy-alpha-D-ribose 1-phosphate = 2-deoxy-D-ribose 5-phosphate. The enzyme catalyses alpha-D-ribose 1-phosphate = D-ribose 5-phosphate. The protein operates within carbohydrate degradation; 2-deoxy-D-ribose 1-phosphate degradation; D-glyceraldehyde 3-phosphate and acetaldehyde from 2-deoxy-alpha-D-ribose 1-phosphate: step 1/2. In terms of biological role, isomerase that catalyzes the conversion of deoxy-ribose 1-phosphate (dRib-1-P) and ribose 1-phosphate (Rib-1-P) to deoxy-ribose 5-phosphate (dRib-5-P) and ribose 5-phosphate (Rib-5-P), respectively. This is Phosphopentomutase from Shewanella frigidimarina (strain NCIMB 400).